Here is a 1006-residue protein sequence, read N- to C-terminus: Unconventional myosin-Id (1006 aa).

Ala-2 carries the post-translational modification N-acetylalanine. One can recognise a Myosin motor domain in the interval 9–695; the sequence is FGKADFVLMD…TLFTLEELRA (687 aa). 102 to 109 contacts ATP; sequence GESGAGKT. Ser-200 bears the Phosphoserine mark. A Phosphotyrosine modification is found at Tyr-536. Residues 572–594 form an actin-binding region; the sequence is MIALVDNLASKEPYYVRCIKPND. 2 IQ domains span residues 699 to 719 and 721 to 741; these read VRIVLFLQKVWRGTLARMRYK and TKAALTIIRYYRRYKVKSYIH. A TH1 domain is found at 812-1005; that stretch reads GQRADLGLQR…RSGFILSVPG (194 aa).

The protein belongs to the TRAFAC class myosin-kinesin ATPase superfamily. Myosin family. Interacts (via the two IQ motifs) with calmodulin. Binds an additional calmodulin chain via a third, C-terminal region. Interacts with F-actin.

The protein resides in the cytoplasm. The protein localises to the perikaryon. Its subcellular location is the cell projection. It is found in the dendrite. It localises to the early endosome. The protein resides in the cell cortex. In terms of biological role, unconventional myosin that functions as actin-based motor protein with ATPase activity. Plays a role in endosomal protein trafficking, and especially in the transfer of cargo proteins from early to recycling endosomes. Required for normal planar cell polarity in ciliated tracheal cells, for normal rotational polarity of cilia, and for coordinated, unidirectional ciliary movement in the trachea. Required for normal, polarized cilia organization in brain ependymal epithelial cells. This chain is Unconventional myosin-Id (MYO1D), found in Bos taurus (Bovine).